A 147-amino-acid chain; its full sequence is Acidic phospholipase A2 S3-24 (147 aa).

The signal sequence occupies residues 1-19 (MYPAHLLVLLAVCVSLLGA). A propeptide spanning residues 20 to 27 (SDMPPQPL) is cleaved from the precursor. Cystine bridges form between cysteine 38–cysteine 99, cysteine 54–cysteine 146, cysteine 56–cysteine 72, cysteine 71–cysteine 127, cysteine 78–cysteine 120, cysteine 88–cysteine 113, and cysteine 106–cysteine 118. 3 residues coordinate Ca(2+): tyrosine 55, glycine 57, and glycine 59. Residue histidine 75 is part of the active site. Aspartate 76 contributes to the Ca(2+) binding site. The active site involves aspartate 121.

The protein belongs to the phospholipase A2 family. Group I subfamily. D49 sub-subfamily. Requires Ca(2+) as cofactor. As to expression, expressed by the venom gland.

It is found in the secreted. The enzyme catalyses a 1,2-diacyl-sn-glycero-3-phosphocholine + H2O = a 1-acyl-sn-glycero-3-phosphocholine + a fatty acid + H(+). Snake venom phospholipase A2 (PLA2) that inhibits collagen-induced platelet aggregation. PLA2 catalyzes the calcium-dependent hydrolysis of the 2-acyl groups in 3-sn-phosphoglycerides. The polypeptide is Acidic phospholipase A2 S3-24 (Austrelaps superbus (Lowland copperhead snake)).